Here is a 940-residue protein sequence, read N- to C-terminus: Isoleucine--tRNA ligase (940 aa).

The 'HIGH' region motif lies at 58 to 68 (PYANGSIHIGH). Glu-564 contacts L-isoleucyl-5'-AMP. The 'KMSKS' region motif lies at 605–609 (KMSKS). Lys-608 contributes to the ATP binding site. 4 residues coordinate Zn(2+): Cys-903, Cys-906, Cys-923, and Cys-926.

This sequence belongs to the class-I aminoacyl-tRNA synthetase family. IleS type 1 subfamily. In terms of assembly, monomer. Zn(2+) serves as cofactor.

The protein localises to the cytoplasm. It catalyses the reaction tRNA(Ile) + L-isoleucine + ATP = L-isoleucyl-tRNA(Ile) + AMP + diphosphate. Functionally, catalyzes the attachment of isoleucine to tRNA(Ile). As IleRS can inadvertently accommodate and process structurally similar amino acids such as valine, to avoid such errors it has two additional distinct tRNA(Ile)-dependent editing activities. One activity is designated as 'pretransfer' editing and involves the hydrolysis of activated Val-AMP. The other activity is designated 'posttransfer' editing and involves deacylation of mischarged Val-tRNA(Ile). This Shewanella sp. (strain MR-4) protein is Isoleucine--tRNA ligase.